Here is a 184-residue protein sequence, read N- to C-terminus: UPF0149 protein Avin_47340 (184 aa).

This sequence belongs to the UPF0149 family.

This is UPF0149 protein Avin_47340 from Azotobacter vinelandii (strain DJ / ATCC BAA-1303).